Consider the following 876-residue polypeptide: Valine--tRNA ligase (876 aa).

Residues 44–54 carry the 'HIGH' region motif; the sequence is PNVTGKLHLGH. The short motif at 520–524 is the 'KMSKS' region element; the sequence is KMSKS. Position 523 (K523) interacts with ATP. The stretch at 805–876 forms a coiled coil; it reads LEGLIDMDKE…VKARIEQLKA (72 aa).

The protein belongs to the class-I aminoacyl-tRNA synthetase family. ValS type 1 subfamily. In terms of assembly, monomer.

Its subcellular location is the cytoplasm. It carries out the reaction tRNA(Val) + L-valine + ATP = L-valyl-tRNA(Val) + AMP + diphosphate. Catalyzes the attachment of valine to tRNA(Val). As ValRS can inadvertently accommodate and process structurally similar amino acids such as threonine, to avoid such errors, it has a 'posttransfer' editing activity that hydrolyzes mischarged Thr-tRNA(Val) in a tRNA-dependent manner. The protein is Valine--tRNA ligase of Staphylococcus carnosus (strain TM300).